The following is a 485-amino-acid chain: uncharacterized protein (485 aa).

The next 13 helical transmembrane spans lie at 13-33 (WSALSSLTIIVLGFLQMVILS), 38-58 (PFEFGVLSIMTVVFLFTDMLA), 79-99 (ALYWVNIFLGVFLFVVTIILS), 111-131 (LSFLIQLTALVFIIMPHGQQY), 160-180 (VIIGIITKNASCAVFGYLLTV), 211-231 (LLFSFYLTLDSILNYINSSIT), 234-254 (IVARVLGAIYVGGYNLSFNVA), 297-317 (INFPALLGLCIIAKDFVYLVF), 321-341 (WLFIVPTLQLLCIAGAMRMVA), 365-385 (IIIFIPVLYFSTIWNGMVGAA), 388-408 (FLICQAINALLSYFFLLKPVL), 420-440 (FIPFVHTLPMILLLLVCDIYI), and 445-465 (LTFFILKIVIGGGVYILTIFI).

This sequence belongs to the polysaccharide synthase family.

Its subcellular location is the cell membrane. This is an uncharacterized protein from Klebsiella pneumoniae.